Here is a 108-residue protein sequence, read N- to C-terminus: Small ribosomal subunit protein eS25x (108 aa).

The segment at 1–36 is disordered; it reads MAPKKDKVPPPSSKPAKSGGGKQKKKKWSKGKQKEK. The span at 22-31 shows a compositional bias: basic residues; sequence KQKKKKWSKG.

Belongs to the eukaryotic ribosomal protein eS25 family.

The sequence is that of Small ribosomal subunit protein eS25x (RPS25D) from Arabidopsis thaliana (Mouse-ear cress).